A 1121-amino-acid chain; its full sequence is Transcription factor CSR2 (1121 aa).

A phosphoserine mark is found at S23, S46, and S127. Disordered regions lie at residues P273–P342, H513–L532, L579–M600, and I837–S860. Residues T276–A310 are compositionally biased toward polar residues. 3 stretches are compositionally biased toward low complexity: residues N318–A329, S519–P529, and N582–G597. Position 327 is a phosphoserine (S327). Over residues I837–V846 the composition is skewed to basic and acidic residues. K841 is covalently cross-linked (Glycyl lysine isopeptide (Lys-Gly) (interchain with G-Cter in ubiquitin)). Residues N847–S860 are compositionally biased toward polar residues. The residue at position 987 (S987) is a Phosphoserine. Residues K999 to G1009 show a composition bias toward polar residues. Disordered stretches follow at residues K999–P1022 and T1075–S1121. Positions T1084–N1093 are enriched in low complexity.

The protein belongs to the CSR2 family. Phosphorylated by CDC28.

It localises to the cytoplasm. It is found in the nucleus. Transcription factor involved in the regulation of fermentation and aerobic oxidation. Acts as a repressor of CYC1, which is involved in electron flow through the mitochondria under aerobic condition. Required for pseudohyphal formation upon nitrogen starvation. May be involved in viability at stationary phase and aging. In Saccharomyces cerevisiae (strain ATCC 204508 / S288c) (Baker's yeast), this protein is Transcription factor CSR2 (CSR2).